The sequence spans 1219 residues: ATP-dependent helicase/nuclease subunit A (1219 aa).

The region spanning T12–R477 is the UvrD-like helicase ATP-binding domain. ATP is bound at residue A33–T40. Positions E478–G786 constitute a UvrD-like helicase C-terminal domain. A disordered region spans residues P997–T1016. The span at E1004–T1016 shows a compositional bias: basic and acidic residues.

Belongs to the helicase family. AddA subfamily. Heterodimer of AddA and AddB/RexB. Mg(2+) is required as a cofactor.

The catalysed reaction is Couples ATP hydrolysis with the unwinding of duplex DNA by translocating in the 3'-5' direction.. The enzyme catalyses ATP + H2O = ADP + phosphate + H(+). In terms of biological role, the heterodimer acts as both an ATP-dependent DNA helicase and an ATP-dependent, dual-direction single-stranded exonuclease. Recognizes the chi site generating a DNA molecule suitable for the initiation of homologous recombination. The AddA nuclease domain is required for chi fragment generation; this subunit has the helicase and 3' -&gt; 5' nuclease activities. The chain is ATP-dependent helicase/nuclease subunit A from Staphylococcus saprophyticus subsp. saprophyticus (strain ATCC 15305 / DSM 20229 / NCIMB 8711 / NCTC 7292 / S-41).